A 281-amino-acid chain; its full sequence is 2-dehydro-3-deoxyphosphooctonate aldolase 1 (281 aa).

The protein belongs to the KdsA family.

It localises to the cytoplasm. It carries out the reaction D-arabinose 5-phosphate + phosphoenolpyruvate + H2O = 3-deoxy-alpha-D-manno-2-octulosonate-8-phosphate + phosphate. It functions in the pathway carbohydrate biosynthesis; 3-deoxy-D-manno-octulosonate biosynthesis; 3-deoxy-D-manno-octulosonate from D-ribulose 5-phosphate: step 2/3. The protein operates within bacterial outer membrane biogenesis; lipopolysaccharide biosynthesis. This Pseudomonas putida (strain ATCC 47054 / DSM 6125 / CFBP 8728 / NCIMB 11950 / KT2440) protein is 2-dehydro-3-deoxyphosphooctonate aldolase 1 (kdsA1).